Here is a 469-residue protein sequence, read N- to C-terminus: 3-isopropylmalate dehydratase large subunit (469 aa).

[4Fe-4S] cluster contacts are provided by cysteine 350, cysteine 410, and cysteine 413.

The protein belongs to the aconitase/IPM isomerase family. LeuC type 1 subfamily. In terms of assembly, heterodimer of LeuC and LeuD. [4Fe-4S] cluster is required as a cofactor.

It carries out the reaction (2R,3S)-3-isopropylmalate = (2S)-2-isopropylmalate. It functions in the pathway amino-acid biosynthesis; L-leucine biosynthesis; L-leucine from 3-methyl-2-oxobutanoate: step 2/4. Its function is as follows. Catalyzes the isomerization between 2-isopropylmalate and 3-isopropylmalate, via the formation of 2-isopropylmaleate. The protein is 3-isopropylmalate dehydratase large subunit of Rhizobium rhizogenes (strain K84 / ATCC BAA-868) (Agrobacterium radiobacter).